The primary structure comprises 225 residues: ATP-dependent Clp protease proteolytic subunit (225 aa).

The active-site Nucleophile is Ser123. Residue His148 is part of the active site.

Belongs to the peptidase S14 family. In terms of assembly, fourteen ClpP subunits assemble into 2 heptameric rings which stack back to back to give a disk-like structure with a central cavity, resembling the structure of eukaryotic proteasomes.

It is found in the cytoplasm. The enzyme catalyses Hydrolysis of proteins to small peptides in the presence of ATP and magnesium. alpha-casein is the usual test substrate. In the absence of ATP, only oligopeptides shorter than five residues are hydrolyzed (such as succinyl-Leu-Tyr-|-NHMec, and Leu-Tyr-Leu-|-Tyr-Trp, in which cleavage of the -Tyr-|-Leu- and -Tyr-|-Trp bonds also occurs).. Cleaves peptides in various proteins in a process that requires ATP hydrolysis. Has a chymotrypsin-like activity. Plays a major role in the degradation of misfolded proteins. The sequence is that of ATP-dependent Clp protease proteolytic subunit from Chlorobaculum tepidum (strain ATCC 49652 / DSM 12025 / NBRC 103806 / TLS) (Chlorobium tepidum).